We begin with the raw amino-acid sequence, 305 residues long: Mitochondrial brown fat uncoupling protein 1 (305 aa).

At 1 to 10 (MVGHAATDVP) the chain is on the mitochondrial intermembrane side. Residues 11-32 (PTMAVKIFSAGVAACVADIITF) traverse the membrane as a helical segment. 3 Solcar repeats span residues 11–102 (PTMA…VQEF), 109–199 (ASLG…MKEA), and 208–293 (DDVP…LKRE). The Mitochondrial matrix segment spans residues 33–73 (PLDTAKVRLQIQGECLTSSAFRYKGVLGTIITLAKTEGPVK). Lysine 56 is a binding site for fatty acid 16:0. Residues 74-96 (LYSGLPAGLQRQISFASLRIGLY) form a helical membrane-spanning segment. At 97 to 114 (DTVQEFFTTGKEASLGSK) the chain is on the mitochondrial intermembrane side. Residues 115–131 (ISAGLTTGGVAVFIGQP) traverse the membrane as a helical segment. Topologically, residues 132–176 (TEVVKVRLQAQSHLHGPKPRYTGTYNAYRIIATTEGLTGLWKGTT) are mitochondrial matrix. Residues 177 to 193 (PNLTRNVIINCTELVTY) traverse the membrane as a helical segment. Residues 194–210 (DLMKEALVKNKLLADDV) lie on the Mitochondrial intermembrane side of the membrane. A helical transmembrane segment spans residues 211 to 230 (PCHFVSAVVAGFCTTVLSSP). Topologically, residues 231–264 (VDVVKTRFVNSSPGQYTSVPNCAMMMLTREGPSA) are mitochondrial matrix. Cysteine sulfenic acid (-SOH) is present on cysteine 252. The helical transmembrane segment at 265 to 287 (FFKGFVPSFLRLGSWNIIMFVCF) threads the bilayer. Lysine 267 contributes to the fatty acid 16:0 binding site. Over 288-305 (EQLKRELMKSRQAMDCAT) the chain is Mitochondrial intermembrane.

Belongs to the mitochondrial carrier (TC 2.A.29) family. In terms of assembly, most probably functions as a monomer. Binds one purine nucleotide per monomer. However, has also been suggested to function as a homodimer or a homotetramer. Tightly associates with cardiolipin in the mitochondrion inner membrane; may stabilize and regulate its activity. May undergo sulfenylation upon cold exposure. May increase the sensitivity of UCP1 thermogenic function to the activation by noradrenaline probably through structural effects. In terms of processing, may undergo ubiquitin-mediated proteasomal degradation.

Its subcellular location is the mitochondrion inner membrane. The enzyme catalyses H(+)(in) = H(+)(out). With respect to regulation, has no constitutive proton transporter activity and has to be activated by long-chain fatty acids/LCFAs. Inhibited by purine nucleotides. Both purine nucleotides and LCFAs bind the cytosolic side of the transporter and directly compete to activate or inhibit it. Activated by noradrenaline and reactive oxygen species. Despite lacking canonical translational encoding for selenocysteine, a small pool of the protein has been observed to selectively incorporate selenocysteine at 'Cys-252'. Selenocysteine-modified protein is highly sensitive to redox modification and may constitute a pool of protein highly sensitive to activation by elevated levels of reactive oxygen species (ROS). Mitochondrial protein responsible for thermogenic respiration, a specialized capacity of brown adipose tissue and beige fat that participates in non-shivering adaptive thermogenesis to temperature and diet variations and more generally to the regulation of energy balance. Functions as a long-chain fatty acid/LCFA and proton symporter, simultaneously transporting one LCFA and one proton through the inner mitochondrial membrane. However, LCFAs remaining associated with the transporter via their hydrophobic tails, it results in an apparent transport of protons activated by LCFAs. Thereby, dissipates the mitochondrial proton gradient and converts the energy of substrate oxydation into heat instead of ATP. Regulates the production of reactive oxygen species/ROS by mitochondria. This Ovis aries (Sheep) protein is Mitochondrial brown fat uncoupling protein 1.